A 146-amino-acid chain; its full sequence is Probable NADH dehydrogenase [ubiquinone] 1 alpha subcomplex subunit 12 (146 aa).

The protein belongs to the complex I NDUFA12 subunit family. Complex I is composed of 45 different subunits.

The protein resides in the mitochondrion inner membrane. Functionally, accessory subunit of the mitochondrial membrane respiratory chain NADH dehydrogenase (Complex I), that is believed not to be involved in catalysis. Complex I functions in the transfer of electrons from NADH to the respiratory chain. The immediate electron acceptor for the enzyme is believed to be ubiquinone. The polypeptide is Probable NADH dehydrogenase [ubiquinone] 1 alpha subcomplex subunit 12 (Caenorhabditis elegans).